Consider the following 141-residue polypeptide: D-aminoacyl-tRNA deacylase (141 aa).

The Gly-cisPro motif, important for rejection of L-amino acids motif lies at 133–134; that stretch reads GP.

Belongs to the DTD family. As to quaternary structure, homodimer.

The protein resides in the cytoplasm. It carries out the reaction glycyl-tRNA(Ala) + H2O = tRNA(Ala) + glycine + H(+). The enzyme catalyses a D-aminoacyl-tRNA + H2O = a tRNA + a D-alpha-amino acid + H(+). In terms of biological role, an aminoacyl-tRNA editing enzyme that deacylates mischarged D-aminoacyl-tRNAs. Also deacylates mischarged glycyl-tRNA(Ala), protecting cells against glycine mischarging by AlaRS. Acts via tRNA-based rather than protein-based catalysis; rejects L-amino acids rather than detecting D-amino acids in the active site. By recycling D-aminoacyl-tRNA to D-amino acids and free tRNA molecules, this enzyme counteracts the toxicity associated with the formation of D-aminoacyl-tRNA entities in vivo and helps enforce protein L-homochirality. The sequence is that of D-aminoacyl-tRNA deacylase from Kineococcus radiotolerans (strain ATCC BAA-149 / DSM 14245 / SRS30216).